The chain runs to 407 residues: Peptidase T (407 aa).

H82 lines the Zn(2+) pocket. D84 is an active-site residue. Residue D143 coordinates Zn(2+). E177 functions as the Proton acceptor in the catalytic mechanism. Residues E178, D200, and H382 each coordinate Zn(2+).

This sequence belongs to the peptidase M20B family. Zn(2+) is required as a cofactor.

The protein resides in the cytoplasm. The enzyme catalyses Release of the N-terminal residue from a tripeptide.. Cleaves the N-terminal amino acid of tripeptides. The chain is Peptidase T from Streptococcus pyogenes serotype M49 (strain NZ131).